Reading from the N-terminus, the 88-residue chain is Large ribosomal subunit protein bL27 (88 aa).

The segment at 1–20 is disordered; sequence MASKKGVGSTKDGRDSIAKR.

Belongs to the bacterial ribosomal protein bL27 family.

The chain is Large ribosomal subunit protein bL27 (rpmA) from Geobacillus stearothermophilus (Bacillus stearothermophilus).